The sequence spans 92 residues: Precursor of CEP12 (92 aa).

An N-terminal signal peptide occupies residues 1–30; sequence MVNRDNSIVALSFFMLFLLVLHLHFETTTA. Positions 31 to 70 are excised as a propeptide; sequence ARKPVRVFGPPSSIEWSPPSPPKDDFEWFEINIYKNIEQT. The disordered stretch occupies residues 70–92; sequence TAFRPTGQGPSQGIGHKDPPGAP. Hydroxyproline is present on residues proline 74 and proline 79. The propeptide occupies 86 to 92; that stretch reads KDPPGAP.

It belongs to the C-terminally encoded plant signaling peptide (CEP) family. As to quaternary structure, interacts with CEP receptors (e.g. CEPR1 and CEPR2). In terms of processing, the mature small signaling peptide is generated by proteolytic processing of the longer precursor.

Its subcellular location is the secreted. It localises to the extracellular space. It is found in the apoplast. Functionally, extracellular signaling peptide that may regulate primary root growth rate and systemic nitrogen (N)-demand signaling. The polypeptide is Precursor of CEP12 (Arabidopsis thaliana (Mouse-ear cress)).